A 346-amino-acid chain; its full sequence is UPF0053 protein sll1254 (346 aa).

A run of 4 helical transmembrane segments spans residues 1 to 21, 58 to 78, 87 to 107, and 121 to 141; these read MLEI…CSCA, IGTI…TIGA, AWMG…GEII, and LLIA…VWLI. The CNNM transmembrane domain occupies 1–179; the sequence is MLEIVAAIFI…YKEGVIEGDE (179 aa). CBS domains follow at residues 198–259 and 263–320; these read MTPR…GYKT and LARP…IVDE.

It belongs to the UPF0053 family.

Its subcellular location is the cell membrane. The protein is UPF0053 protein sll1254 of Synechocystis sp. (strain ATCC 27184 / PCC 6803 / Kazusa).